Here is a 761-residue protein sequence, read N- to C-terminus: Mitochondrial intermediate peptidase 1 (761 aa).

Residue His-530 participates in Zn(2+) binding. Residue Glu-531 is part of the active site. Zn(2+) contacts are provided by His-534 and His-537.

This sequence belongs to the peptidase M3 family. It depends on Zn(2+) as a cofactor.

The protein localises to the mitochondrion matrix. It catalyses the reaction Release of an N-terminal octapeptide as second stage of processing of some proteins imported into the mitochondrion.. Cleaves proteins, imported into the mitochondrion, to their mature size. While most mitochondrial precursor proteins are processed to the mature form in one step by mitochondrial processing peptidase (MPP), the sequential cleavage by MIP of an octapeptide after initial processing by MPP is a required step for a subgroup of nuclear-encoded precursor proteins destined for the matrix or the inner membrane. This Cryptococcus neoformans var. neoformans serotype D (strain B-3501A) (Filobasidiella neoformans) protein is Mitochondrial intermediate peptidase 1 (OCT1).